The chain runs to 223 residues: DNA mismatch repair protein MutH (223 aa).

The protein belongs to the MutH family.

It localises to the cytoplasm. Its function is as follows. Sequence-specific endonuclease that cleaves unmethylated GATC sequences. It is involved in DNA mismatch repair. In Haemophilus influenzae (strain ATCC 51907 / DSM 11121 / KW20 / Rd), this protein is DNA mismatch repair protein MutH.